Reading from the N-terminus, the 453-residue chain is MARLFGTDGVRGVANRDLTAELALALGSAAARRLSTITTATATDSAERARRVAVVGRDPRASGEMLEAAVIAGLTSEGVDALRVGVLPTPAVAYLTSAYDADFGVMISASHNPMPDNGIKIFGPGGHKLDDATEDRIEELVHAGAVARPTGTGIGRVLDAEDALDRYLRHAGKAVTTRLDGLTVVVDCAHGAAWAAAPRAYRAAGANVIAINAEPTGLNINDNCGSTHMDVVRAAVVEHGADLGLAHDGDADRCLAVDATGHVVDGDAIMVILALAMQEAGELAANTLVATVMSNLGLHLAMRAAGIDVRTTSVGDRYVLEELRSGEFSLGGEQSGHIVMPSFGTTGDGIVTGLRLMSRMAQTGSSLAELADAMHSLPQVLINVAVADKTTVAQAPSVRSAVAAAEAELGDTGRILLRPSGTEQVVRVMVEAADEDTARQVAARVAESVSLQG.

Ser-110 functions as the Phosphoserine intermediate in the catalytic mechanism. 4 residues coordinate Mg(2+): Ser-110, Asp-248, Asp-250, and Asp-252. Ser-110 carries the post-translational modification Phosphoserine.

It belongs to the phosphohexose mutase family. It depends on Mg(2+) as a cofactor. Post-translationally, activated by phosphorylation.

It carries out the reaction alpha-D-glucosamine 1-phosphate = D-glucosamine 6-phosphate. Catalyzes the conversion of glucosamine-6-phosphate to glucosamine-1-phosphate. This chain is Phosphoglucosamine mutase, found in Mycolicibacterium smegmatis (strain ATCC 700084 / mc(2)155) (Mycobacterium smegmatis).